The chain runs to 1148 residues: Trafficking protein particle complex subunit 9 (1148 aa).

S566 and S953 each carry phosphoserine.

The protein belongs to the NIBP family. As to quaternary structure, component of the multisubunit TRAPP (transport protein particle) complex, which includes at least TRAPPC2, TRAPPC2L, TRAPPC3, TRAPPC3L, TRAPPC4, TRAPPC5, TRAPPC8, TRAPPC9, TRAPPC10, TRAPPC11 and TRAPPC12. Directly interacts with IKBKB and MAP3K14. In terms of tissue distribution, expressed in neurons of the pyramidal layer of the cortex, in spinal cord motor neurons and white matter neurons (at protein level).

The protein localises to the golgi apparatus. It localises to the cis-Golgi network. Its subcellular location is the endoplasmic reticulum. It is found in the cytoplasm. Functions as an activator of NF-kappa-B through increased phosphorylation of the IKK complex. May function in neuronal cells differentiation. May play a role in vesicular transport from endoplasmic reticulum to Golgi. This is Trafficking protein particle complex subunit 9 (Trappc9) from Mus musculus (Mouse).